Here is a 203-residue protein sequence, read N- to C-terminus: Small ribosomal subunit protein uS4 (203 aa).

Residues Arg93 to Val156 form the S4 RNA-binding domain.

It belongs to the universal ribosomal protein uS4 family. Part of the 30S ribosomal subunit. Contacts protein S5. The interaction surface between S4 and S5 is involved in control of translational fidelity.

One of the primary rRNA binding proteins, it binds directly to 16S rRNA where it nucleates assembly of the body of the 30S subunit. Its function is as follows. With S5 and S12 plays an important role in translational accuracy. The protein is Small ribosomal subunit protein uS4 of Streptococcus pyogenes serotype M4 (strain MGAS10750).